The chain runs to 470 residues: tRNA (guanine(37)-N(1))-methyltransferase (470 aa).

S-adenosyl-L-methionine-binding positions include 304 to 305 (DL), 332 to 333 (DG), and N370.

It belongs to the class I-like SAM-binding methyltransferase superfamily. TRM5/TYW2 family. Monomer.

The protein resides in the mitochondrion matrix. The protein localises to the nucleus. Its subcellular location is the cytoplasm. The enzyme catalyses guanosine(37) in tRNA + S-adenosyl-L-methionine = N(1)-methylguanosine(37) in tRNA + S-adenosyl-L-homocysteine + H(+). Functionally, specifically methylates the N1 position of guanosine-37 in various cytoplasmic and mitochondrial tRNAs. Methylation is not dependent on the nature of the nucleoside 5' of the target nucleoside. This is the first step in the biosynthesis of wybutosine (yW), a modified base adjacent to the anticodon of tRNAs and required for accurate decoding. In Theileria parva (East coast fever infection agent), this protein is tRNA (guanine(37)-N(1))-methyltransferase.